Here is a 1055-residue protein sequence, read N- to C-terminus: Sodium/potassium exporting P-type ATPase 1 (1055 aa).

Residues 1-73 (MTPSIGYVDE…GADEKISISK (73 aa)) are Cytoplasmic-facing. Residues 74 to 94 (ILAHQIFNAMVLVLIISLIIA) traverse the membrane as a helical segment. The Extracellular segment spans residues 95-99 (LAIKD). Residues 100 to 120 (WISGGVIGFVVFINIFVGFIQ) traverse the membrane as a helical segment. The Cytoplasmic portion of the chain corresponds to 121 to 298 (ELKAEKTMGS…TNVGTPLQRK (178 aa)). The helical transmembrane segment at 299–319 (LSWLAILLFWVAVLFAIVVMA) threads the bilayer. At 320 to 328 (SQEMRVNRN) the chain is on the extracellular side. The chain crosses the membrane as a helical span at residues 329 to 349 (VAIYAICVALSMIPSSLVVVL). Topologically, residues 350 to 789 (TITMAIGAQV…RMSSNIQKFV (440 aa)) are cytoplasmic. Asp385 functions as the 4-aspartylphosphate intermediate in the catalytic mechanism. The Mg(2+) site is built by Asp385 and Thr387. 9 residues coordinate ATP: Thr387, Glu491, Lys544, Arg586, Thr646, Gly647, Asp648, Arg705, and Lys711. Mg(2+) is bound at residue Asp730. Asn733 is a binding site for ATP. A helical membrane pass occupies residues 790–810 (LQLLAENVAQALYLMIGLAFI). Residues 811–816 (DKSGYS) are Extracellular-facing. The chain crosses the membrane as a helical span at residues 817 to 837 (VFPLSPVEVLWIIVVTSCFPA). Topologically, residues 838–866 (MGLGQEKASHDILEQPPNATIFTWEVIID) are cytoplasmic. A helical membrane pass occupies residues 867 to 887 (MIAYGFWMAVCCLVCFVCIVY). The Extracellular portion of the chain corresponds to 888–913 (GKGDGSLGENCNEGSDTGCNLVFRGR). The chain crosses the membrane as a helical span at residues 914 to 934 (SGAFAAFTWCALLLAWECIHL). Residues 935–962 (RLSFFKMRPELENPWWKQLAIDLWDNQF) lie on the Cytoplasmic side of the membrane. A helical transmembrane segment spans residues 963–983 (LFWSVMGAIVSVFPVVYIPVI). Residues 984 to 990 (NNKVFLH) are Extracellular-facing. A helical membrane pass occupies residues 991–1011 (APIGYEWGLAVAFTILFLIGA). Topologically, residues 1012–1055 (EGWKWFKRVYYRKSNANNPEYDLERNDPFKEYSSFSKSNTMEIV) are cytoplasmic.

This sequence belongs to the cation transport ATPase (P-type) (TC 3.A.3) family. Type IID subfamily. It depends on Mg(2+) as a cofactor. In terms of processing, the active site is phosphorylated in presence of sodium or potassium and in conditions of higher pH. Not phosphorylated in presence of calcium ions.

It localises to the cell membrane. It carries out the reaction Na(+)(in) + ATP + H2O = Na(+)(out) + ADP + phosphate + H(+). It catalyses the reaction K(+)(in) + ATP + H2O = K(+)(out) + ADP + phosphate + H(+). In terms of biological role, catalyzes the hydrolysis of ATP coupled with the export of sodium and potassium from the cell. May be an inefficient potassium exporter. May transport other cations such as lithium. Sodium/potassium efflux ATPases are involved in salt tolerance and maintaining the membrane potential across the plasma membrane in high salinity (Na+) or alkaline (K+) environments. The sequence is that of Sodium/potassium exporting P-type ATPase 1 from Schwanniomyces occidentalis (Yeast).